Consider the following 353-residue polypeptide: C-X-C chemokine receptor type 4 (353 aa).

The segment at 1–22 (MEGIRIFTSDNYTEDDLGSGDY) is important for chemokine binding and signaling. The Extracellular portion of the chain corresponds to 1–39 (MEGIRIFTSDNYTEDDLGSGDYDSMKEPCFREENAHFNR). Asparagine 11 carries N-linked (GlcNAc...) asparagine glycosylation. Tyrosine 12 is modified (sulfotyrosine). Serine 19 carries O-linked (Xyl...) (chondroitin sulfate) serine glycosylation. Sulfotyrosine is present on tyrosine 22. Intrachain disulfides connect cysteine 29-cysteine 275 and cysteine 110-cysteine 187. Residues 40-64 (IFLPTVYSIIFLTGIVGNGLVILVM) form a helical membrane-spanning segment. Topologically, residues 65-78 (GYQKKLRSMTDKYR) are cytoplasmic. The chain crosses the membrane as a helical span at residues 79-100 (LHLSVADLLFVLTLPFWAVDAV). The tract at residues 95–98 (WAVD) is chemokine binding. The Extracellular portion of the chain corresponds to 101-111 (ANWYFGKFLCK). Residues 112-131 (AVHVIYTVNLYSSVLILAFI) form a helical membrane-spanning segment. Residues 114–118 (HVIYT) form a chemokine binding region. The Cytoplasmic portion of the chain corresponds to 132–155 (SLDRYLAIVHATNSQKPRKLLAEK). The Important for signaling motif lies at 134-136 (DRY). Residues 136–148 (YLAIVHATNSQKP) are involved in dimerization; when bound to chemokine. Residues 156–175 (VVYVGVWLPAVLLTIPDLIF) form a helical membrane-spanning segment. The Extracellular portion of the chain corresponds to 176 to 196 (ADIKEVDERYICDRFYPSDLW). Positions 187–191 (CDRFY) are chemokine binding, important for signaling. The tract at residues 192-211 (PSDLWLVVFQFQHIVVGLLL) is involved in dimerization. Residues 197-217 (LVVFQFQHIVVGLLLPGIVIL) traverse the membrane as a helical segment. The Cytoplasmic segment spans residues 218–242 (SCYCIIISKLSHSKGYQKRKALKTT). The chain crosses the membrane as a helical span at residues 243–262 (VILILTFFACWLPYYIGISI). Topologically, residues 263–283 (DSFILLEIIQQGCEFESTVHK) are extracellular. The involved in dimerization stretch occupies residues 267-269 (LLE). A helical transmembrane segment spans residues 284 to 303 (WISITEALAFFHCCLNPILY). The Cytoplasmic portion of the chain corresponds to 304–353 (AFLGAKFKTSAQHALTSVSRGSSLKILSKGKRGGHSSVSTESESSSFHSS). Serine 320 and serine 322 each carry phosphoserine. Serine 325 and serine 326 each carry phosphoserine; by PKC and GRK6. The interval 330-353 (LSKGKRGGHSSVSTESESSSFHSS) is disordered. Phosphoserine; by GRK6 is present on serine 331. Lysine 332 participates in a covalent cross-link: Glycyl lysine isopeptide (Lys-Gly) (interchain with G-Cter in ubiquitin). Residues 338 to 353 (HSSVSTESESSSFHSS) are compositionally biased toward low complexity. Serine 340 carries the post-translational modification Phosphoserine; by GRK6. 2 positions are modified to phosphoserine: serine 349 and serine 352.

Belongs to the G-protein coupled receptor 1 family. As to quaternary structure, monomer. Can form homodimers. Interacts with CD164. Interacts with ARRB2; the interaction is dependent on the C-terminal phosphorylation of CXCR4 and allows activation of MAPK1 and MAPK3. Interacts with ARR3; the interaction is dependent on the C-terminal phosphorylation of CXCR4 and modulates calcium mobilization. Interacts with RNF113A; the interaction, enhanced by CXCL12, promotes CXCR4 ubiquitination and subsequent degradation. Interacts (via the cytoplasmic C-terminal) with ITCH (via the WW domains I and II); the interaction, enhanced by CXCL12, promotes CXCR4 ubiquitination and leads to its degradation. Interacts with extracellular ubiquitin. Interacts with DBN1; this interaction is enhanced by antigenic stimulation. Following LPS binding, may form a complex with GDF5, HSP90AA1 and HSPA8. Phosphorylated on agonist stimulation. Rapidly phosphorylated on serine and threonine residues in the C-terminal. Phosphorylation at Ser-325 and Ser-326 leads to recruitment of ITCH, ubiquitination and protein degradation. Post-translationally, ubiquitinated after ligand binding, leading to its degradation. Ubiquitinated by ITCH at the cell membrane on agonist stimulation. The ubiquitin-dependent mechanism, endosomal sorting complex required for transport (ESCRT), then targets CXCR4 for lysosomal degradation. This process is dependent also on prior Ser-/Thr-phosphorylation in the C-terminal of CXCR4. Also binding of ARRB1 to STAM negatively regulates CXCR4 sorting to lysosomes though modulating ubiquitination of SFR5S. In terms of processing, sulfation is required for efficient binding of CXCL12/SDF-1alpha and promotes its dimerization. O- and N-glycosylated. N-glycosylation can mask coreceptor function. The O-glycosylation chondroitin sulfate attachment does not affect interaction with CXCL12/SDF-1alpha nor its coreceptor activity. As to expression, brain, heart, kidney, lung and liver.

It is found in the cell membrane. The protein localises to the cell junction. It localises to the early endosome. Its subcellular location is the late endosome. The protein resides in the lysosome. Its function is as follows. Receptor for the C-X-C chemokine CXCL12/SDF-1 that transduces a signal by increasing intracellular calcium ion levels and enhancing MAPK1/MAPK3 activation. Involved in the AKT signaling cascade. Plays a role in regulation of cell migration, e.g. during wound healing. Acts as a receptor for extracellular ubiquitin; leading to enhanced intracellular calcium ions and reduced cellular cAMP levels. Binds bacterial lipopolysaccharide (LPS) et mediates LPS-induced inflammatory response, including TNF secretion by monocytes. Involved in hematopoiesis and in cardiac ventricular septum formation. Also plays an essential role in vascularization of the gastrointestinal tract, probably by regulating vascular branching and/or remodeling processes in endothelial cells. Involved in cerebellar development. In the CNS, could mediate hippocampal-neuron survival. The sequence is that of C-X-C chemokine receptor type 4 (CXCR4) from Bos taurus (Bovine).